A 422-amino-acid chain; its full sequence is Glucosylglycerol-phosphate phosphatase (422 aa).

Residue Asp403 is the Proton donor of the active site.

The protein belongs to the histidine acid phosphatase family. In terms of assembly, monomer. Interacts with GGPS.

It catalyses the reaction 2-O-(alpha-D-glucopyranosyl)-sn-glycerol 3-phosphate + H2O = 2-O-(alpha-D-glucopyranosyl)glycerol + phosphate. In terms of biological role, phosphorylates glucosylglycerol-phosphate the precursor of the osmoprotectant glucosylglycerol necessary for salt adaptation of Synechocystis. The sequence is that of Glucosylglycerol-phosphate phosphatase (stpA) from Synechocystis sp. (strain ATCC 27184 / PCC 6803 / Kazusa).